A 389-amino-acid polypeptide reads, in one-letter code: Succinate--CoA ligase [ADP-forming] subunit beta (389 aa).

Positions 9–244 (KQILRKYGIP…PSQMSNNEAR (236 aa)) constitute an ATP-grasp domain. Residues Lys-46, 53-55 (GRG), Ile-102, and Glu-107 contribute to the ATP site. Mg(2+) is bound by residues Asn-199 and Asp-213. Residues Asn-264 and 321–323 (GIM) contribute to the substrate site.

The protein belongs to the succinate/malate CoA ligase beta subunit family. Heterotetramer of two alpha and two beta subunits. Mg(2+) is required as a cofactor.

It carries out the reaction succinate + ATP + CoA = succinyl-CoA + ADP + phosphate. The enzyme catalyses GTP + succinate + CoA = succinyl-CoA + GDP + phosphate. It functions in the pathway carbohydrate metabolism; tricarboxylic acid cycle; succinate from succinyl-CoA (ligase route): step 1/1. Functionally, succinyl-CoA synthetase functions in the citric acid cycle (TCA), coupling the hydrolysis of succinyl-CoA to the synthesis of either ATP or GTP and thus represents the only step of substrate-level phosphorylation in the TCA. The beta subunit provides nucleotide specificity of the enzyme and binds the substrate succinate, while the binding sites for coenzyme A and phosphate are found in the alpha subunit. In Protochlamydia amoebophila (strain UWE25), this protein is Succinate--CoA ligase [ADP-forming] subunit beta.